The primary structure comprises 479 residues: Probable xyloglucan galactosyltransferase GT15 (479 aa).

Residues 1–20 (MKNNNSSSVSIENHPWKKKP) lie on the Cytoplasmic side of the membrane. Residues 21–40 (TTLLLFLSLLSISLLLLRLS) form a helical; Signal-anchor for type II membrane protein membrane-spanning segment. Topologically, residues 41–479 (QDKIILITTT…GIRRNEFKTD (439 aa)) are lumenal. Asn-155, Asn-242, Asn-285, and Asn-391 each carry an N-linked (GlcNAc...) asparagine glycan.

This sequence belongs to the glycosyltransferase 47 family. As to expression, expressed in roots, hypocotyls, cotyledons, leaves, stems and sepals.

The protein resides in the golgi apparatus membrane. Its function is as follows. Functions in xyloglucan synthesis by adding side chains to the xylosylated glucan backbone. Involved in the galactosylation of hemicellulose xyloglucan. The sequence is that of Probable xyloglucan galactosyltransferase GT15 from Arabidopsis thaliana (Mouse-ear cress).